The following is a 331-amino-acid chain: Betaine-homocysteine S-methyltransferase (331 aa).

Residues 3 to 324 (VNQKWNWDTK…TDVLAIRKYV (322 aa)) enclose the Hcy-binding domain. 3 residues coordinate Zn(2+): C243, C309, and C310.

The protein belongs to the Betaine-homocysteine S-methyltransferase, BHMT family. Requires Zn(2+) as cofactor.

It carries out the reaction L-homocysteine + glycine betaine = N,N-dimethylglycine + L-methionine. The protein operates within amino-acid biosynthesis; L-methionine biosynthesis via de novo pathway. Its function is as follows. Involved in the regulation of homocysteine metabolism. Converts betaine and homocysteine to dimethylglycine and methionine, respectively. The chain is Betaine-homocysteine S-methyltransferase from Drosophila melanogaster (Fruit fly).